We begin with the raw amino-acid sequence, 210 residues long: MEIPVYNASGEIVKNINISEDVFGVPFNEALVHQAFVAQQANARQGTQSTKTRGEVQGSSRKIYRQKGTGNARMGTNRSPVRRHGGVAFGPRPRDFSKDLPKKMRRQAIRCVLSFKLESGELKVIDQLSFDEPKTRDMAKILTALQVISPTLIAVDNPDTNFIKSARNIPAVKTTPANLLNISDMLKNKQLVMTEEAVRQVEELWGQRSG.

Residues 41 to 51 (ANARQGTQSTK) are compositionally biased toward polar residues. Disordered regions lie at residues 41–60 (ANARQGTQSTKTRGEVQGSS) and 67–98 (KGTGNARMGTNRSPVRRHGGVAFGPRPRDFSK).

It belongs to the universal ribosomal protein uL4 family. As to quaternary structure, part of the 50S ribosomal subunit.

One of the primary rRNA binding proteins, this protein initially binds near the 5'-end of the 23S rRNA. It is important during the early stages of 50S assembly. It makes multiple contacts with different domains of the 23S rRNA in the assembled 50S subunit and ribosome. Functionally, forms part of the polypeptide exit tunnel. This is Large ribosomal subunit protein uL4 from Dehalococcoides mccartyi (strain ATCC BAA-2100 / JCM 16839 / KCTC 5957 / BAV1).